Reading from the N-terminus, the 591-residue chain is Lysyl oxidase homolog 1 (591 aa).

The first 22 residues, 1–22 (MALALTGWQLVWGACVCVLVHG), serve as a signal peptide directing secretion. Positions 23–91 (QQAPPGQGSD…PRRRGGLRRR (69 aa)) are excised as a propeptide. Disordered stretches follow at residues 77 to 107 (APQA…SDTV) and 233 to 373 (EYGG…RLSV). The span at 82–92 (PRRRGGLRRRQ) shows a compositional bias: basic residues. The span at 298–313 (NGGGGGGTYGGGGGDP) shows a compositional bias: gly residues. Residues 319-386 (PPYGNMPPEA…YRPNQNGRGL (68 aa)) are interaction with FBLN5. The tract at residues 387-591 (PDLVPDPNYV…STTNCKIVQS (205 aa)) is lysyl-oxidase like. Intrachain disulfides connect Cys412–Cys418, Cys465–Cys514, Cys498–Cys504, Cys525–Cys535, and Cys572–Cys586. The Cu cation site is built by His466, His468, and His470. The segment at residues 494–529 (KASFCLEDSTCDFGNLKRYACTSHTQGLSPGCYDTY) is a cross-link (lysine tyrosylquinone (Lys-Tyr)). Position 529 is a 2',4',5'-topaquinone (Tyr529).

This sequence belongs to the lysyl oxidase family. Interacts (via propeptide) with EFEMP2. Interacts with FBLN5. It depends on Cu cation as a cofactor. Lysine tyrosylquinone residue is required as a cofactor. Post-translationally, the lysine tyrosylquinone cross-link (LTQ) is generated by condensation of the epsilon-amino group of a lysine with a topaquinone produced by oxidation of tyrosine. In terms of processing, proteolytic processing by a furin-like protease causes removal of N-terminal propeptide resulting in an enzyme largely inactive, but further proteolytic processing by BMP1 results in enzyme activation.

It localises to the secreted. It is found in the extracellular space. The protein localises to the extracellular matrix. It catalyses the reaction L-lysyl-[protein] + O2 + H2O = (S)-2-amino-6-oxohexanoyl-[protein] + H2O2 + NH4(+). Functionally, catalyzes the oxidative deamination of lysine and hydroxylysine residues in collagen and elastin, resulting in the formation of covalent cross-linkages, and the stabilization of collagen and elastin fibers. Essential for the elastic fiber homeostasis and for their maintenance at adult age. This Bos taurus (Bovine) protein is Lysyl oxidase homolog 1 (LOXL1).